Reading from the N-terminus, the 246-residue chain is Type III pantothenate kinase (246 aa).

ATP is bound at residue aspartate 6–valine 13. A substrate-binding site is contributed by glycine 103–arginine 106. Catalysis depends on aspartate 105, which acts as the Proton acceptor. Aspartate 125 is a K(+) binding site. An ATP-binding site is contributed by threonine 128. Threonine 179 provides a ligand contact to substrate.

This sequence belongs to the type III pantothenate kinase family. Homodimer. NH4(+) is required as a cofactor. Requires K(+) as cofactor.

The protein resides in the cytoplasm. The enzyme catalyses (R)-pantothenate + ATP = (R)-4'-phosphopantothenate + ADP + H(+). It participates in cofactor biosynthesis; coenzyme A biosynthesis; CoA from (R)-pantothenate: step 1/5. Functionally, catalyzes the phosphorylation of pantothenate (Pan), the first step in CoA biosynthesis. This is Type III pantothenate kinase from Thermotoga sp. (strain RQ2).